Here is a 254-residue protein sequence, read N- to C-terminus: Ribosomal RNA small subunit methyltransferase J (254 aa).

S-adenosyl-L-methionine contacts are provided by residues 101–102 (RD), 117–118 (ER), 153–154 (SS), and Asp171.

Belongs to the methyltransferase superfamily. RsmJ family.

It localises to the cytoplasm. The enzyme catalyses guanosine(1516) in 16S rRNA + S-adenosyl-L-methionine = N(2)-methylguanosine(1516) in 16S rRNA + S-adenosyl-L-homocysteine + H(+). Functionally, specifically methylates the guanosine in position 1516 of 16S rRNA. The sequence is that of Ribosomal RNA small subunit methyltransferase J from Enterobacter sp. (strain 638).